The sequence spans 178 residues: uncharacterized protein (178 aa).

This is an uncharacterized protein from Sinorhizobium fredii (strain NBRC 101917 / NGR234).